Consider the following 425-residue polypeptide: Aromatic prenyl transferase ptmE (425 aa).

Residues 83–84 (GI) and E92 each bind L-tryptophan. Substrate-binding residues include R107, K198, Y200, R265, K267, Y269, Y345, Y410, and Y414.

It belongs to the tryptophan dimethylallyltransferase family. Homodimer.

The protein operates within secondary metabolite biosynthesis. Functionally, aromatic prenyl transferase; part of the gene cluster that mediates the biosynthesis of the indole diterpenes penitrems. The geranylgeranyl diphosphate (GGPP) synthase ptmG catalyzes the first step in penitrem biosynthesis via conversion of farnesyl pyrophosphate and isopentyl pyrophosphate into geranylgeranyl pyrophosphate (GGPP). Condensation of indole-3-glycerol phosphate with GGPP by the prenyl transferase ptmC then forms 3-geranylgeranylindole (3-GGI). Epoxidation by the FAD-dependent monooxygenase ptmM leads to a epoxidized-GGI that is substrate of the terpene cyclase ptmB for cyclization to yield paspaline. Paspaline is subsequently converted to 13-desoxypaxilline by the cytochrome P450 monooxygenase ptmP, the latter being then converted to paxilline by the cytochrome P450 monooxygenase ptmQ. Paxilline is converted to beta-paxitriol via C-10 ketoreduction by the short-chain dehydrogenase ptmH which can be monoprenylated at the C-20 by the indole diterpene prenyltransferase ptmD. A two-step elimination (acetylation and elimination) process performed by the O-acetyltransferase ptmV and ptmI leads to the production of the prenylated form of penijanthine. The FAD-linked oxidoreductase ptmO then converts the prenylated form of penijanthine into PC-M5 which is in turn transformed into PC-M4 by the aromatic dimethylallyltransferase ptmE. Five sequential oxidative transformations performed by the cytochrome P450 monooxygenases ptmK, ptmU, ptmL, ptmN and ptmJ yield the various penitrem compounds. PtmK, ptmU and ptmM are involved in the formation of the key bicyclic ring of penitrem C via the formation of the intermediates secopenitrem D and penitrem D. PtmL catalyzes the epoxidation of penitrem D and C to yield penitrem B and F, respectively. PtmJ catalyzes the last benzylic hydroxylation to convert penitrem B to prenitrem E and penitrem F to penitrem A. In Penicillium ochrochloron, this protein is Aromatic prenyl transferase ptmE.